The sequence spans 422 residues: MAYFIDRRLNGKNKSMVNRQRFLRRYKSQIKQSIAEAINKRSVTDVDSGESVSIPTGDINEPMFHQGRGGTRHRVHPGNDHFVQNDRVERPQGGGGGGSGQGNASQDGEGEDEFVFQISKDEYLDLLFEDLALPNLKKNQYKQLTEYKTHRAGYTANGVPANISVVRSLQNSLARRTAMTAGKRRALHELEDELTQMENTEPVQLLEEERLRKEIAELRKKIESVPFIDTFDLRYKNYERRPEPSSQAVMFCLMDVSGSMDQATKDMAKRFYILLYLFLSRTYKNVDVVYIRHHTQAKEVDEQEFFYSQETGGTIVSSALKLMNEVVEERYDPAQWNIYAAQASDGDNWADDSPLCHELLAKKLLPMVRYYSYIEITRRAHQTLWREYEDLQAKCENFAMQHIREPDDIYPVFRELFHKQTA.

The segment covering 77–90 has biased composition (basic and acidic residues); the sequence is PGNDHFVQNDRVER. Positions 77–109 are disordered; that stretch reads PGNDHFVQNDRVERPQGGGGGGSGQGNASQDGE. The segment covering 92–101 has biased composition (gly residues); sequence QGGGGGGSGQ.

It belongs to the UPF0229 family.

This is UPF0229 protein Spro_2732 from Serratia proteamaculans (strain 568).